The primary structure comprises 445 residues: Probable fructoselysine/psicoselysine transporter FrlA (445 aa).

11 helical membrane-spanning segments follow: residues 10–32 (LGFW…FVSV), 39–61 (AGTP…PQMC), 97–119 (FWAN…LGFL), 126–143 (LGKF…LLHL), 153–175 (QTLI…IFWF), 188–210 (IGAT…SYTG), 230–252 (RALI…VISG), 272–294 (WIPA…VILG), 341–363 (GIFF…VMCF), 384–406 (LWRT…ILVA), and 411–433 (WAPI…AYAF).

This sequence belongs to the amino acid-polyamine-organocation (APC) superfamily.

The protein localises to the cell inner membrane. The catalysed reaction is N(6)-(D-fructosyl)-L-lysine(in) = N(6)-(D-fructosyl)-L-lysine(out). It carries out the reaction N(6)-(D-psicosyl)-L-lysine(in) = N(6)-(D-psicosyl)-L-lysine(out). It participates in carbohydrate metabolism; fructoselysine degradation. Is likely involved in the transport of fructoselysine and psicoselysine to the cytoplasm, where they are degraded. The sequence is that of Probable fructoselysine/psicoselysine transporter FrlA (frlA) from Escherichia coli O157:H7.